Consider the following 47-residue polypeptide: Protein 0.5 (47 aa).

A signal peptide spans 1-23 (MYMLTIGLLTALGLAVGASFGKA). Residues 24-43 (LGVAVGSYFTACIIIGIIKG) traverse the membrane as a helical segment.

It is found in the host membrane. This chain is Protein 0.5, found in Escherichia phage T7 (Bacteriophage T7).